We begin with the raw amino-acid sequence, 1583 residues long: Pentafunctional AROM polypeptide (1583 aa).

The interval 1–384 (MSNPTKISIL…YETRASVVAN (384 aa)) is 3-dehydroquinate synthase. NAD(+)-binding positions include 44–46 (DTN), 81–84 (EVSK), 114–116 (GGV), and aspartate 119. Arginine 130 lines the 7-phospho-2-dehydro-3-deoxy-D-arabino-heptonate pocket. 139-140 (TT) contacts NAD(+). Aspartate 146 and lysine 152 together coordinate 7-phospho-2-dehydro-3-deoxy-D-arabino-heptonate. Lysine 161 serves as a coordination point for NAD(+). Asparagine 162 contacts 7-phospho-2-dehydro-3-deoxy-D-arabino-heptonate. NAD(+)-binding positions include 179-182 (FLET) and asparagine 190. Glutamate 194 lines the Zn(2+) pocket. Residues 194–197 (EVIK) and lysine 250 contribute to the 7-phospho-2-dehydro-3-deoxy-D-arabino-heptonate site. The active-site Proton acceptor; for 3-dehydroquinate synthase activity is the glutamate 260. 7-phospho-2-dehydro-3-deoxy-D-arabino-heptonate contacts are provided by residues 264–268 (RNLLN) and histidine 271. Histidine 271 is a binding site for Zn(2+). The Proton acceptor; for 3-dehydroquinate synthase activity role is filled by histidine 275. The 7-phospho-2-dehydro-3-deoxy-D-arabino-heptonate site is built by histidine 287 and lysine 356. Histidine 287 contacts Zn(2+). The segment at 397–842 (VHPGVAQSSN…WDTLRQLFKV (446 aa)) is EPSP synthase. Catalysis depends on cysteine 824, which acts as the For EPSP synthase activity. The interval 863–1055 (NASIYIIGMR…KEKEHSFFAS (193 aa)) is shikimate kinase. 870-877 (GMRGAGKS) is a binding site for ATP. Residues 1056-1276 (LTLPDLREAG…AAPGQLSATE (221 aa)) form a 3-dehydroquinase region. Residue histidine 1179 is the Proton acceptor; for 3-dehydroquinate dehydratase activity of the active site. The active-site Schiff-base intermediate with substrate; for 3-dehydroquinate dehydratase activity is the lysine 1207. Residues 1289-1583 (PKKFAIFGSP…SARACSSPLI (295 aa)) form a shikimate dehydrogenase region.

It in the N-terminal section; belongs to the sugar phosphate cyclases superfamily. Dehydroquinate synthase family. In the 2nd section; belongs to the EPSP synthase family. This sequence in the 3rd section; belongs to the shikimate kinase family. The protein in the 4th section; belongs to the type-I 3-dehydroquinase family. It in the C-terminal section; belongs to the shikimate dehydrogenase family. As to quaternary structure, homodimer. Zn(2+) is required as a cofactor.

The protein resides in the cytoplasm. The enzyme catalyses 7-phospho-2-dehydro-3-deoxy-D-arabino-heptonate = 3-dehydroquinate + phosphate. It catalyses the reaction 3-dehydroquinate = 3-dehydroshikimate + H2O. The catalysed reaction is shikimate + NADP(+) = 3-dehydroshikimate + NADPH + H(+). It carries out the reaction shikimate + ATP = 3-phosphoshikimate + ADP + H(+). The enzyme catalyses 3-phosphoshikimate + phosphoenolpyruvate = 5-O-(1-carboxyvinyl)-3-phosphoshikimate + phosphate. Its pathway is metabolic intermediate biosynthesis; chorismate biosynthesis; chorismate from D-erythrose 4-phosphate and phosphoenolpyruvate: step 2/7. It functions in the pathway metabolic intermediate biosynthesis; chorismate biosynthesis; chorismate from D-erythrose 4-phosphate and phosphoenolpyruvate: step 3/7. It participates in metabolic intermediate biosynthesis; chorismate biosynthesis; chorismate from D-erythrose 4-phosphate and phosphoenolpyruvate: step 4/7. The protein operates within metabolic intermediate biosynthesis; chorismate biosynthesis; chorismate from D-erythrose 4-phosphate and phosphoenolpyruvate: step 5/7. Its pathway is metabolic intermediate biosynthesis; chorismate biosynthesis; chorismate from D-erythrose 4-phosphate and phosphoenolpyruvate: step 6/7. In terms of biological role, the AROM polypeptide catalyzes 5 consecutive enzymatic reactions in prechorismate polyaromatic amino acid biosynthesis. The sequence is that of Pentafunctional AROM polypeptide (aromA) from Emericella nidulans (strain FGSC A4 / ATCC 38163 / CBS 112.46 / NRRL 194 / M139) (Aspergillus nidulans).